The sequence spans 179 residues: Large ribosomal subunit protein uL6 (179 aa).

This sequence belongs to the universal ribosomal protein uL6 family. As to quaternary structure, part of the 50S ribosomal subunit.

This protein binds to the 23S rRNA, and is important in its secondary structure. It is located near the subunit interface in the base of the L7/L12 stalk, and near the tRNA binding site of the peptidyltransferase center. The polypeptide is Large ribosomal subunit protein uL6 (Halothermothrix orenii (strain H 168 / OCM 544 / DSM 9562)).